Consider the following 266-residue polypeptide: Trypsin 5G1 (266 aa).

Residues 1–18 (MTRIILILTATFFACALG) form the signal peptide. The propeptide at 19–39 (ASTGGSHPLRPWWNALRSSGR) is activation peptide. In terms of domain architecture, Peptidase S1 spans 40 to 265 (IVGGFEVPVE…VRDWVKEVSG (226 aa)). Cysteine 66 and cysteine 82 are disulfide-bonded. Active-site charge relay system residues include histidine 81 and aspartate 125. 2 disulfides stabilise this stretch: cysteine 190/cysteine 206 and cysteine 217/cysteine 241. Serine 221 serves as the catalytic Charge relay system.

Belongs to the peptidase S1 family. In terms of tissue distribution, midgut.

The protein localises to the secreted. Its subcellular location is the extracellular space. The enzyme catalyses Preferential cleavage: Arg-|-Xaa, Lys-|-Xaa.. In terms of biological role, major function may be to aid in digestion of the blood meal. The sequence is that of Trypsin 5G1 from Aedes aegypti (Yellowfever mosquito).